A 236-amino-acid polypeptide reads, in one-letter code: Syntaxin-8 (236 aa).

The Cytoplasmic segment spans residues 1 to 215; sequence MAPDPWFSTY…LVDRKSASCG (215 aa). Positions 42–65 form a coiled coil; the sequence is LTIRTLLKNLKVKIDLLKDLLLRA. 2 positions are modified to phosphoserine: S102 and S160. In terms of domain architecture, t-SNARE coiled-coil homology spans 145–207; that stretch reads QKIIQEQDAG…RTEARRVTLV (63 aa). The helical; Anchor for type IV membrane protein transmembrane segment at 216-232 threads the bilayer; it reads MIMVILLLLVAIVVVAV. At 233-236 the chain is on the vesicular side; the sequence is WPTN.

It belongs to the syntaxin family. As to quaternary structure, part of the SNARE core complex containing STX7, VAMP8 and VTI1B. Interacts with VAMP8. Forms a SNARE complex with STX7, VTI1B and VAMP8 which functions in the homotypic fusion of late endosomes. Component of the SNARE complex composed of STX7, STX8, VAMP7 and VTI1B that is required for heterotypic fusion of late endosomes with lysosomes. Interacts with HECTD3. Interacts with TPC1. In terms of processing, ubiquitinated by HECTD3. As to expression, widely expressed in all tissues examined.

Its subcellular location is the membrane. Functionally, vesicle trafficking protein that functions in the early secretory pathway, possibly by mediating retrograde transport from cis-Golgi membranes to the ER. This chain is Syntaxin-8 (Stx8), found in Rattus norvegicus (Rat).